Reading from the N-terminus, the 457-residue chain is Multidrug resistance protein MdtK (457 aa).

At 1 to 10 (MQKYISEARL) the chain is on the cytoplasmic side. The chain crosses the membrane as a helical span at residues 11-31 (LLALAIPVILAQIAQTAMGFV). Topologically, residues 32 to 52 (DTVMAGGYSATDMAAVAIGTS) are periplasmic. A helical membrane pass occupies residues 53 to 73 (IWLPAILFGHGLLLALTPVIA). The Cytoplasmic portion of the chain corresponds to 74 to 92 (QLNGSGRRERIAHQVRQGF). Residues 93–113 (WLAGFVSVLIMLVLWNAGYII) form a helical membrane-spanning segment. The Periplasmic segment spans residues 114–126 (RSMENIDPALADK). A helical membrane pass occupies residues 127–147 (AVGYLRALLWGAPGYLFFQVA). The Cytoplasmic portion of the chain corresponds to 148–159 (RNQCEGLAKTKP). The chain crosses the membrane as a helical span at residues 160 to 180 (GMVMGFIGLLVNIPVNYIFIY). Topologically, residues 181 to 188 (GHFGMPEL) are periplasmic. The chain crosses the membrane as a helical span at residues 189–209 (GGVGCGVATAAVYWVMFLAMV). Over 210 to 242 (SYIKRARSMRDIRNEKGTAKPDPAVMKRLIQLG) the chain is Cytoplasmic. A helical membrane pass occupies residues 243–263 (LPIALALFFEVTLFAVVALLV). Residues 264-275 (SPLGIVDVAGHQ) are Periplasmic-facing. A helical transmembrane segment spans residues 276–296 (IALNFSSLMFVLPMSLAAAVT). The Cytoplasmic portion of the chain corresponds to 297-313 (IRVGYRLGQGSTLDAQT). A helical transmembrane segment spans residues 314–334 (AARTGLMVGVCMATLTAIFTV). At 335–349 (SLREQIALLYNDNPE) the chain is on the periplasmic side. The chain crosses the membrane as a helical span at residues 350-370 (VVTLAAHLMLLAAVYQISDSI). Over 371 to 386 (QVIGSGILRGYKDTRS) the chain is Cytoplasmic. The helical transmembrane segment at 387–407 (IFYITFTAYWVLGLPSGYILA) threads the bilayer. Residues 408–417 (LTDLVVEPMG) are Periplasmic-facing. A helical transmembrane segment spans residues 418–438 (PAGFWIGFIIGLTSAAIMMML). The Cytoplasmic segment spans residues 439 to 457 (RMRFLQRMPSAIILQRASR).

The protein belongs to the multi antimicrobial extrusion (MATE) (TC 2.A.66.1) family. MdtK subfamily.

The protein localises to the cell inner membrane. Its function is as follows. Multidrug efflux pump that functions probably as a Na(+)/drug antiporter. In Shigella boydii serotype 4 (strain Sb227), this protein is Multidrug resistance protein MdtK.